The following is a 158-amino-acid chain: SsrA-binding protein (158 aa).

This sequence belongs to the SmpB family.

Its subcellular location is the cytoplasm. Functionally, required for rescue of stalled ribosomes mediated by trans-translation. Binds to transfer-messenger RNA (tmRNA), required for stable association of tmRNA with ribosomes. tmRNA and SmpB together mimic tRNA shape, replacing the anticodon stem-loop with SmpB. tmRNA is encoded by the ssrA gene; the 2 termini fold to resemble tRNA(Ala) and it encodes a 'tag peptide', a short internal open reading frame. During trans-translation Ala-aminoacylated tmRNA acts like a tRNA, entering the A-site of stalled ribosomes, displacing the stalled mRNA. The ribosome then switches to translate the ORF on the tmRNA; the nascent peptide is terminated with the 'tag peptide' encoded by the tmRNA and targeted for degradation. The ribosome is freed to recommence translation, which seems to be the essential function of trans-translation. This is SsrA-binding protein from Chloroflexus aggregans (strain MD-66 / DSM 9485).